A 430-amino-acid chain; its full sequence is Tol-Pal system protein TolB (430 aa).

Residues 1 to 19 (MKKQIFFTLILLISGLARA) form the signal peptide.

The protein belongs to the TolB family. In terms of assembly, the Tol-Pal system is composed of five core proteins: the inner membrane proteins TolA, TolQ and TolR, the periplasmic protein TolB and the outer membrane protein Pal. They form a network linking the inner and outer membranes and the peptidoglycan layer.

The protein resides in the periplasm. In terms of biological role, part of the Tol-Pal system, which plays a role in outer membrane invagination during cell division and is important for maintaining outer membrane integrity. The sequence is that of Tol-Pal system protein TolB from Hahella chejuensis (strain KCTC 2396).